We begin with the raw amino-acid sequence, 430 residues long: Serine hydroxymethyltransferase (430 aa).

120–122 (GHI) contacts (6S)-5,6,7,8-tetrahydrofolate. K226 bears the N6-(pyridoxal phosphate)lysine mark.

It belongs to the SHMT family. Homodimer. Pyridoxal 5'-phosphate is required as a cofactor.

The protein resides in the cytoplasm. The protein operates within amino-acid biosynthesis; glycine biosynthesis; glycine from L-serine: step 1/1. Its function is as follows. Catalyzes the reversible interconversion of serine and glycine with a modified folate serving as the one-carbon carrier. Also exhibits a pteridine-independent aldolase activity toward beta-hydroxyamino acids, producing glycine and aldehydes, via a retro-aldol mechanism. The protein is Serine hydroxymethyltransferase of Pyrobaculum aerophilum (strain ATCC 51768 / DSM 7523 / JCM 9630 / CIP 104966 / NBRC 100827 / IM2).